The following is a 390-amino-acid chain: Phosphopentomutase (390 aa).

6 residues coordinate Mn(2+): D11, D283, H288, D324, H325, and H336.

This sequence belongs to the phosphopentomutase family. The cofactor is Mn(2+).

Its subcellular location is the cytoplasm. The catalysed reaction is 2-deoxy-alpha-D-ribose 1-phosphate = 2-deoxy-D-ribose 5-phosphate. It catalyses the reaction alpha-D-ribose 1-phosphate = D-ribose 5-phosphate. It participates in carbohydrate degradation; 2-deoxy-D-ribose 1-phosphate degradation; D-glyceraldehyde 3-phosphate and acetaldehyde from 2-deoxy-alpha-D-ribose 1-phosphate: step 1/2. Isomerase that catalyzes the conversion of deoxy-ribose 1-phosphate (dRib-1-P) and ribose 1-phosphate (Rib-1-P) to deoxy-ribose 5-phosphate (dRib-5-P) and ribose 5-phosphate (Rib-5-P), respectively. This is Phosphopentomutase from Clostridium novyi (strain NT).